We begin with the raw amino-acid sequence, 131 residues long: uncharacterized protein (131 aa).

This is an uncharacterized protein from Acanthamoeba polyphaga (Amoeba).